Here is a 377-residue protein sequence, read N- to C-terminus: Chaperone protein DnaJ (377 aa).

The region spanning 5 to 70 is the J domain; that stretch reads DYYEILGVAK…QKRAAYDQFG (66 aa). The CR-type zinc-finger motif lies at 130–208; sequence GTEVKIRVPS…CHGQGRVEEH (79 aa). Zn(2+) contacts are provided by cysteine 143, cysteine 146, cysteine 160, cysteine 163, cysteine 182, cysteine 185, cysteine 196, and cysteine 199. 4 CXXCXGXG motif repeats span residues 143 to 150, 160 to 167, 182 to 189, and 196 to 203; these read CGECHGSG, CGTCGGVG, CPRCHGTG, and CKACHGQG.

It belongs to the DnaJ family. As to quaternary structure, homodimer. Zn(2+) serves as cofactor.

It is found in the cytoplasm. Participates actively in the response to hyperosmotic and heat shock by preventing the aggregation of stress-denatured proteins and by disaggregating proteins, also in an autonomous, DnaK-independent fashion. Unfolded proteins bind initially to DnaJ; upon interaction with the DnaJ-bound protein, DnaK hydrolyzes its bound ATP, resulting in the formation of a stable complex. GrpE releases ADP from DnaK; ATP binding to DnaK triggers the release of the substrate protein, thus completing the reaction cycle. Several rounds of ATP-dependent interactions between DnaJ, DnaK and GrpE are required for fully efficient folding. Also involved, together with DnaK and GrpE, in the DNA replication of plasmids through activation of initiation proteins. The protein is Chaperone protein DnaJ of Thioalkalivibrio sulfidiphilus (strain HL-EbGR7).